Here is a 494-residue protein sequence, read N- to C-terminus: NADH-quinone oxidoreductase subunit N (494 aa).

14 helical membrane passes run 9-29 (VIPEIFLAAATCAILLIDLFL), 36-56 (LTYVLSLATLVVCAVLSLSDF), 73-93 (PMSNLLKFCTYIAVGLTLVYS), 107-127 (LGGEFYILSLFTVLGQMVMMS), 131-151 (FLIIYLGLEIMSLSLYALVAF), 166-186 (FVLGALASGFLLYGISMLYGA), 209-229 (LIFGLVFVVAGLAFKLGAVPF), 241-261 (PTAVTLMLGGAPKLAAFAITI), 278-298 (MLTILSVLSMAIGNITAIMQT), 304-324 (LAYSTISQVGFILLGLLSGVV), 339-359 (MFYVITYVLTTLGMFGVIMLL), 382-402 (FAFVTLLLMFSLAGVPPVVGF), 416-436 (GQIWLAVVAVLFSLIGAFYYL), and 469-489 (ALLALGLVPGPLMTACAAAII).

It belongs to the complex I subunit 2 family. In terms of assembly, NDH-1 is composed of 14 different subunits. Subunits NuoA, H, J, K, L, M, N constitute the membrane sector of the complex.

Its subcellular location is the cell inner membrane. It catalyses the reaction a quinone + NADH + 5 H(+)(in) = a quinol + NAD(+) + 4 H(+)(out). NDH-1 shuttles electrons from NADH, via FMN and iron-sulfur (Fe-S) centers, to quinones in the respiratory chain. The immediate electron acceptor for the enzyme in this species is believed to be ubiquinone. Couples the redox reaction to proton translocation (for every two electrons transferred, four hydrogen ions are translocated across the cytoplasmic membrane), and thus conserves the redox energy in a proton gradient. This chain is NADH-quinone oxidoreductase subunit N, found in Herminiimonas arsenicoxydans.